The sequence spans 295 residues: 33 kDa chaperonin (295 aa).

Disulfide bonds link cysteine 237/cysteine 239 and cysteine 270/cysteine 273.

Belongs to the HSP33 family. Under oxidizing conditions two disulfide bonds are formed involving the reactive cysteines. Under reducing conditions zinc is bound to the reactive cysteines and the protein is inactive.

The protein resides in the cytoplasm. Functionally, redox regulated molecular chaperone. Protects both thermally unfolding and oxidatively damaged proteins from irreversible aggregation. Plays an important role in the bacterial defense system toward oxidative stress. In Shouchella clausii (strain KSM-K16) (Alkalihalobacillus clausii), this protein is 33 kDa chaperonin.